Reading from the N-terminus, the 143-residue chain is Peptide methionine sulfoxide reductase MsrB (143 aa).

Residues 5-126 (KEEKIKSLNR…NSAALRFVPK (122 aa)) enclose the MsrB domain. Cysteine 115 acts as the Nucleophile in catalysis.

This sequence belongs to the MsrB Met sulfoxide reductase family.

The catalysed reaction is L-methionyl-[protein] + [thioredoxin]-disulfide + H2O = L-methionyl-(R)-S-oxide-[protein] + [thioredoxin]-dithiol. In Bacillus subtilis (strain 168), this protein is Peptide methionine sulfoxide reductase MsrB.